The primary structure comprises 550 residues: Glutamyl-tRNA(Gln) amidotransferase subunit A, mitochondrial (550 aa).

Residues K79 and S171 each act as charge relay system in the active site. S195 acts as the Acyl-ester intermediate in catalysis. Positions 371 to 390 (EKDENKVDNDNDDDDDVDEN) are disordered.

It belongs to the amidase family. GatA subfamily. As to quaternary structure, subunit of the heterotrimeric GatCAB amidotransferase (AdT) complex, composed of A, B and C subunits.

Its subcellular location is the mitochondrion. It carries out the reaction L-glutamyl-tRNA(Gln) + L-glutamine + ATP + H2O = L-glutaminyl-tRNA(Gln) + L-glutamate + ADP + phosphate + H(+). Allows the formation of correctly charged Gln-tRNA(Gln) through the transamidation of misacylated Glu-tRNA(Gln) in the mitochondria. The reaction takes place in the presence of glutamine and ATP through an activated gamma-phospho-Glu-tRNA(Gln). The protein is Glutamyl-tRNA(Gln) amidotransferase subunit A, mitochondrial of Dictyostelium discoideum (Social amoeba).